A 335-amino-acid chain; its full sequence is MKRIAVDAMGGDHAPQAVVEGVNQALAAFPDIEIQLYGDEAKIKQYLTATERVSIVHTTEKINSDDEPVKAIRRKKEASMVLATKAVKDGQADAVLSAGNTGALLAAGVFVVGRIKNIDRPGLMSTLPTMDGKGFDMMDLGANAENIAHHLYQYGILGSFYAEHVRGVKQPRVGLLNNGTEDTKGTPVHQEAYKLLAEDKSINFIGNVEARELLNSVADVVVTDGFTGNAVLKTIEGTAKSIVGQLTGSIKNGGLRAKLGGLLVKPTLKKALGAMDYKTAGGAVLLGLKAPVIKAHGSSDAQSIFYTIKQTRSILEAGIVEKSVAKFSVVEESHD.

It belongs to the PlsX family. In terms of assembly, homodimer. Probably interacts with PlsY.

The protein localises to the cytoplasm. It catalyses the reaction a fatty acyl-[ACP] + phosphate = an acyl phosphate + holo-[ACP]. It participates in lipid metabolism; phospholipid metabolism. Catalyzes the reversible formation of acyl-phosphate (acyl-PO(4)) from acyl-[acyl-carrier-protein] (acyl-ACP). This enzyme utilizes acyl-ACP as fatty acyl donor, but not acyl-CoA. The polypeptide is Phosphate acyltransferase (Streptococcus suis (strain 98HAH33)).